A 62-amino-acid polypeptide reads, in one-letter code: Large ribosomal subunit protein uL30 (62 aa).

It belongs to the universal ribosomal protein uL30 family. As to quaternary structure, part of the 50S ribosomal subunit.

The protein is Large ribosomal subunit protein uL30 of Hydrogenovibrio crunogenus (strain DSM 25203 / XCL-2) (Thiomicrospira crunogena).